The primary structure comprises 1223 residues: MIDVNKFESMQIGLASPNKIRSWSYGEVKKPETINYRTLKPEKDGLFDERIFGPTKDWSCACGKYKGIRYRGIVCDRCGVEVTSAKVRRERMGHIELAAPVSHIWYFKGIPSRMGLVLDISPRALEEVIYFAAYIVIDAGDTDLEDKQLLTEAEYREKKAKFGNRFEAKMGAEAVKELLEQVDIDKEVHDLKEELKTATGQKRTRAIRRLDILDAFKNSGNKPSWMVMDCIPVIPPDLRPMVQLDGGRFATSDLNDLYRRVINRNNRLKRLLDLNAPRIIVQNEKRMLQEAVDALIDNGRRGRPVVGPGNRPLKSLSHMLKGKQGRFRQNLLGKRVDYSGRSVIDVSPKLKFYQCGVPRPMALELFKPFVMHELVKRGLASNIKNAKRKIDREDDDIWDILEDVIKERPVLLNRAPTLHRLGIQAFEPVLVPGKSIRLHPLACEAYNADFDGDQMAIHVPLSDEAVAESRLLMLAAHHILAPKDGKPIVTPSQDIVLGNYWLTQAERGREGEGMIFDSPAEAAIAYANGDIHYHTRIGLAADSMPEKPWPKGYEHGIFVTTYGKLVFNQIFPKDFFYINDPTQENLTHPVDERYFLQPGEDIHEKLDNMKLGKAFKKGFLSDSIAQIYKDYKVQRTSDFLDDLKELGYTVCTTSGLTIGVEDIPTITDKDDIVAEARKKVDVVSKQYRRGLITDEERHDRVISIWNNCKDIVQNEIAQIHAPRNPITIMADSGARGNISNFTQLAGMRGLMAAPNGGMMEIPVTSNFREGLSVLEMFMSTHGARKGMTDTALKTANSGYLTRRLVDVAQDVIIREEDCGTDRGLTVHAITEGDEMIEPLFDRLVGRYTSKSVYDPETHEVICPADVLMDEDMAHKIVDAGVTEVTIRSVFTCNTQHGVCKKCYGMNLATGDDVEVGEAVGTVAAQSIGEPGTQLTMRNFHNGGVAGAADITQGLPRVQELFEARNPKGRATISEVTGEITSIEEDPAEHTRQITVKGQTDTRTYDVPYTASVAVAEGDHVVRGDKLTLGSIDPKELIRVRDALTTEKYILSEIQKAYRMQGVEIADKHVEVMARQMLQKVRILDPGETDILPGELMDIGEFKARNREVIISGGIPATAQSVILGITKAALETNSFLSAASFQETTRVLTDASIRGKNDPLLGLKENVIIGKIIPAGTGMPVYREMEPKVDVPEDEKKKSVYSIADIEKKLAAADAEKDKGSAD.

Zn(2+) is bound by residues cysteine 60, cysteine 62, cysteine 75, and cysteine 78. 3 residues coordinate Mg(2+): aspartate 449, aspartate 451, and aspartate 453. 4 residues coordinate Zn(2+): cysteine 818, cysteine 892, cysteine 899, and cysteine 902.

This sequence belongs to the RNA polymerase beta' chain family. The RNAP catalytic core consists of 2 alpha, 1 beta, 1 beta' and 1 omega subunit. When a sigma factor is associated with the core the holoenzyme is formed, which can initiate transcription. Mg(2+) is required as a cofactor. Zn(2+) serves as cofactor.

It carries out the reaction RNA(n) + a ribonucleoside 5'-triphosphate = RNA(n+1) + diphosphate. Functionally, DNA-dependent RNA polymerase catalyzes the transcription of DNA into RNA using the four ribonucleoside triphosphates as substrates. The protein is DNA-directed RNA polymerase subunit beta' of Lactobacillus gasseri (strain ATCC 33323 / DSM 20243 / BCRC 14619 / CIP 102991 / JCM 1131 / KCTC 3163 / NCIMB 11718 / NCTC 13722 / AM63).